The sequence spans 76 residues: Conotoxin VnMEKL-0111 (76 aa).

An N-terminal signal peptide occupies residues methionine 1–alanine 18. Residues leucine 19–arginine 45 constitute a propeptide that is removed on maturation. Intrachain disulfides connect cysteine 49/cysteine 65, cysteine 56/cysteine 70, and cysteine 64/cysteine 74.

The protein belongs to the conotoxin O2 superfamily. In terms of tissue distribution, expressed by the venom duct.

It is found in the secreted. The protein is Conotoxin VnMEKL-0111 of Conus ventricosus (Mediterranean cone).